We begin with the raw amino-acid sequence, 87 residues long: Protein U62 (87 aa).

The protein belongs to the herpesviridae UL91 family.

This is Protein U62 (U62) from Human herpesvirus 6B (strain Z29) (HHV-6 variant B).